The sequence spans 491 residues: Probable protein phosphatase 2C 6 (491 aa).

The segment covering 1–16 (MGLCHSKIDKTTRKET) has biased composition (basic and acidic residues). The tract at residues 1–39 (MGLCHSKIDKTTRKETGATSTATTTVERQSSGRLRRPRD) is disordered. Residues 17-28 (GATSTATTTVER) are compositionally biased toward low complexity. The 313-residue stretch at 64–376 (IACLYTQQGK…DDCAVVCLFL (313 aa)) folds into the PPM-type phosphatase domain. Mn(2+) contacts are provided by Asp100, Gly101, Asp321, and Asp367. The interval 391–422 (VNHSHEESTESVTITSSKDADKKEEASTETNE) is disordered.

The protein belongs to the PP2C family. Mg(2+) is required as a cofactor. The cofactor is Mn(2+).

It catalyses the reaction O-phospho-L-seryl-[protein] + H2O = L-seryl-[protein] + phosphate. The enzyme catalyses O-phospho-L-threonyl-[protein] + H2O = L-threonyl-[protein] + phosphate. The protein is Probable protein phosphatase 2C 6 of Arabidopsis thaliana (Mouse-ear cress).